The chain runs to 384 residues: tRNA-specific 2-thiouridylase MnmA (384 aa).

Residues 9–16 (GMSGGVDS) and Met35 each bind ATP. The interval 95 to 97 (NPD) is interaction with target base in tRNA. The active-site Nucleophile is Cys100. An intrachain disulfide couples Cys100 to Cys196. Gly124 lines the ATP pocket. Residues 146 to 148 (KDQ) form an interaction with tRNA region. The Cysteine persulfide intermediate role is filled by Cys196. Residues 308–309 (RY) are interaction with tRNA.

Belongs to the MnmA/TRMU family.

The protein resides in the cytoplasm. The catalysed reaction is S-sulfanyl-L-cysteinyl-[protein] + uridine(34) in tRNA + AH2 + ATP = 2-thiouridine(34) in tRNA + L-cysteinyl-[protein] + A + AMP + diphosphate + H(+). In terms of biological role, catalyzes the 2-thiolation of uridine at the wobble position (U34) of tRNA, leading to the formation of s(2)U34. This is tRNA-specific 2-thiouridylase MnmA from Burkholderia vietnamiensis (strain G4 / LMG 22486) (Burkholderia cepacia (strain R1808)).